The sequence spans 590 residues: Bacillolysin (590 aa).

The signal sequence occupies residues 1–24 (MKKVWFSLLGGAMLLGSVASGASA). The propeptide at 25-286 (ESSVSGPAQL…GSIVFQYDII (262 aa)) is activation peptide. Positions 339, 341, and 419 each coordinate Ca(2+). Residue H423 coordinates Zn(2+). The active site involves E424. Positions 427 and 447 each coordinate Zn(2+). Positions 466, 469, 470, 473, and 476 each coordinate Ca(2+). H507 serves as the catalytic Proton donor.

It belongs to the peptidase M4 family. Requires Ca(2+) as cofactor. Zn(2+) is required as a cofactor.

It is found in the secreted. It catalyses the reaction Similar, but not identical, to that of thermolysin.. Its function is as follows. Involved in the generation of beta- and alpha-amylases from the large amylase precursor. The chain is Bacillolysin (npr) from Paenibacillus polymyxa (Bacillus polymyxa).